We begin with the raw amino-acid sequence, 351 residues long: Photosystem II D2 protein (351 aa).

Residues 39–59 (CAFLALGGWLTGTTFVTSWYT) traverse the membrane as a helical segment. His-116 serves as a coordination point for chlorophyll a. The helical transmembrane segment at 123-139 (GFMLRQFEIARLVGIRP) threads the bilayer. Residues Gln-128 and Asn-141 each coordinate pheophytin a. Residues 151-164 (VFVSVFLMYPLGQS) form a helical membrane-spanning segment. His-196 serves as a coordination point for chlorophyll a. A helical transmembrane segment spans residues 206 to 226 (GALLCAIHGATVENTLFEDGE). A plastoquinone-binding residues include His-213 and Phe-260. Residue His-213 participates in Fe cation binding. His-267 contacts Fe cation. Residues 277–293 (GLWMSAVGIVGLALNLR) form a helical membrane-spanning segment.

The protein belongs to the reaction center PufL/M/PsbA/D family. PSII is composed of 1 copy each of membrane proteins PsbA, PsbB, PsbC, PsbD, PsbE, PsbF, PsbH, PsbI, PsbJ, PsbK, PsbL, PsbM, PsbT, PsbX, PsbY, PsbZ, Psb30/Ycf12, peripheral proteins PsbO, CyanoQ (PsbQ), PsbU, PsbV and a large number of cofactors. It forms dimeric complexes. The D1/D2 heterodimer binds P680, chlorophylls that are the primary electron donor of PSII, and subsequent electron acceptors. It shares a non-heme iron and each subunit binds pheophytin, quinone, additional chlorophylls, carotenoids and lipids. There is also a Cl(-1) ion associated with D1 and D2, which is required for oxygen evolution. The PSII complex binds additional chlorophylls, carotenoids and specific lipids. is required as a cofactor.

It localises to the cellular thylakoid membrane. The enzyme catalyses 2 a plastoquinone + 4 hnu + 2 H2O = 2 a plastoquinol + O2. In terms of biological role, photosystem II (PSII) is a light-driven water:plastoquinone oxidoreductase that uses light energy to abstract electrons from H(2)O, generating O(2) and a proton gradient subsequently used for ATP formation. It consists of a core antenna complex that captures photons, and an electron transfer chain that converts photonic excitation into a charge separation. The D1/D2 (PsbA/PsbD) reaction center heterodimer binds P680, the primary electron donor of PSII as well as several subsequent electron acceptors. D2 is needed for assembly of a stable PSII complex. In Trichormus variabilis (strain ATCC 29413 / PCC 7937) (Anabaena variabilis), this protein is Photosystem II D2 protein.